The chain runs to 1296 residues: Phosphoribosylformylglycinamidine synthase (1296 aa).

Residues 304–323 (WPGAATGSGGEIRDEGATGR) form a disordered region. ATP-binding positions include 306-317 (GAATGSGGEIRD) and Ala-677. Positions 678, 717, 721, and 885 each coordinate Mg(2+). Ser-887 lines the ATP pocket. Positions 1000-1013 (PDCADQEHQAKQDE) are enriched in basic and acidic residues. The interval 1000-1019 (PDCADQEHQAKQDESDPGLN) is disordered. Residues 1043-1296 (VAVLREQGVN…MFRNARKQLG (254 aa)) enclose the Glutamine amidotransferase type-1 domain. The active-site Nucleophile is the Cys-1136. Residues His-1261 and Glu-1263 contribute to the active site.

It in the N-terminal section; belongs to the FGAMS family. As to quaternary structure, monomer.

Its subcellular location is the cytoplasm. It carries out the reaction N(2)-formyl-N(1)-(5-phospho-beta-D-ribosyl)glycinamide + L-glutamine + ATP + H2O = 2-formamido-N(1)-(5-O-phospho-beta-D-ribosyl)acetamidine + L-glutamate + ADP + phosphate + H(+). The protein operates within purine metabolism; IMP biosynthesis via de novo pathway; 5-amino-1-(5-phospho-D-ribosyl)imidazole from N(2)-formyl-N(1)-(5-phospho-D-ribosyl)glycinamide: step 1/2. Its function is as follows. Phosphoribosylformylglycinamidine synthase involved in the purines biosynthetic pathway. Catalyzes the ATP-dependent conversion of formylglycinamide ribonucleotide (FGAR) and glutamine to yield formylglycinamidine ribonucleotide (FGAM) and glutamate. The sequence is that of Phosphoribosylformylglycinamidine synthase from Yersinia pestis bv. Antiqua (strain Nepal516).